The primary structure comprises 494 residues: UPF0371 protein Sez_1293 (494 aa).

It belongs to the UPF0371 family.

The polypeptide is UPF0371 protein Sez_1293 (Streptococcus equi subsp. zooepidemicus (strain MGCS10565)).